The chain runs to 369 residues: Ubiquinone biosynthesis O-methyltransferase, mitochondrial (369 aa).

Residues 1 to 85 (MWSGRKLGSS…SFRYPWARLY (85 aa)) constitute a mitochondrion transit peptide. Residue Arg-124 participates in S-adenosyl-L-methionine binding. Residues Lys-143 and Lys-149 each carry the N6-acetyllysine modification. Residues Gly-154 and Asp-175 each coordinate S-adenosyl-L-methionine. Lys-196 carries the N6-acetyllysine modification. Position 222 (Ser-222) interacts with S-adenosyl-L-methionine. Positions 223, 226, and 227 each coordinate Mg(2+).

The protein belongs to the class I-like SAM-binding methyltransferase superfamily. UbiG/COQ3 family. Component of a multi-subunit COQ enzyme complex, composed of at least COQ3, COQ4, COQ5, COQ6, COQ7 and COQ9. The cofactor is Mg(2+).

The protein resides in the mitochondrion inner membrane. The catalysed reaction is 3,4-dihydroxy-5-(all-trans-decaprenyl)benzoate + S-adenosyl-L-methionine = 4-hydroxy-3-methoxy-5-(all-trans-decaprenyl)benzoate + S-adenosyl-L-homocysteine + H(+). The enzyme catalyses a 3-demethylubiquinone + S-adenosyl-L-methionine = a ubiquinone + S-adenosyl-L-homocysteine. It catalyses the reaction 3-demethylubiquinol-10 + S-adenosyl-L-methionine = ubiquinol-10 + S-adenosyl-L-homocysteine + H(+). It functions in the pathway cofactor biosynthesis; ubiquinone biosynthesis. Its function is as follows. O-methyltransferase required for two non-consecutive steps during ubiquinone biosynthesis. Catalyzes the 2 O-methylation of 3,4-dihydroxy-5-(all-trans-decaprenyl)benzoic acid into 4-hydroxy-3-methoxy-5-(all-trans-decaprenyl)benzoic acid. Also catalyzes the last step of ubiquinone biosynthesis by mediating methylation of 3-demethylubiquinone into ubiquinone. Also able to mediate the methylation of 3-demethylubiquinol-10 into ubiquinol-10. This chain is Ubiquinone biosynthesis O-methyltransferase, mitochondrial, found in Homo sapiens (Human).